A 74-amino-acid chain; its full sequence is Translation initiation factor IF-1 (74 aa).

The S1-like domain occupies 1 to 72 (MAKETEMEFE…TRGRITYRKI (72 aa)).

Belongs to the IF-1 family. Component of the 30S ribosomal translation pre-initiation complex which assembles on the 30S ribosome in the order IF-2 and IF-3, IF-1 and N-formylmethionyl-tRNA(fMet); mRNA recruitment can occur at any time during PIC assembly.

It localises to the cytoplasm. Its function is as follows. One of the essential components for the initiation of protein synthesis. Stabilizes the binding of IF-2 and IF-3 on the 30S subunit to which N-formylmethionyl-tRNA(fMet) subsequently binds. Helps modulate mRNA selection, yielding the 30S pre-initiation complex (PIC). Upon addition of the 50S ribosomal subunit IF-1, IF-2 and IF-3 are released leaving the mature 70S translation initiation complex. This Mycoplasma capricolum subsp. capricolum (strain California kid / ATCC 27343 / NCTC 10154) protein is Translation initiation factor IF-1.